Here is a 506-residue protein sequence, read N- to C-terminus: GMP synthase [glutamine-hydrolyzing] (506 aa).

The 186-residue stretch at 3–188 folds into the Glutamine amidotransferase type-1 domain; the sequence is GFVILDFGSQ…AQGMCKAPAD (186 aa). Cys80 functions as the Nucleophile in the catalytic mechanism. Active-site residues include His162 and Glu164. The 193-residue stretch at 189-381 folds into the GMPS ATP-PPase domain; the sequence is WDAPHIKDIL…LGLPKEMLWR (193 aa). 217–223 serves as a coordination point for ATP; the sequence is SGGVDST.

Homodimer.

It carries out the reaction XMP + L-glutamine + ATP + H2O = GMP + L-glutamate + AMP + diphosphate + 2 H(+). It functions in the pathway purine metabolism; GMP biosynthesis; GMP from XMP (L-Gln route): step 1/1. In terms of biological role, catalyzes the synthesis of GMP from XMP. The sequence is that of GMP synthase [glutamine-hydrolyzing] from Bdellovibrio bacteriovorus (strain ATCC 15356 / DSM 50701 / NCIMB 9529 / HD100).